We begin with the raw amino-acid sequence, 359 residues long: Serine/threonine-protein phosphatase 2A activator 2 (359 aa).

The protein belongs to the PTPA-type PPIase family.

The protein localises to the cytoplasm. It catalyses the reaction [protein]-peptidylproline (omega=180) = [protein]-peptidylproline (omega=0). Functionally, PPIases accelerate the folding of proteins. It catalyzes the cis-trans isomerization of proline imidic peptide bonds in oligopeptides. Acts as a regulatory subunit for PP2A-like phosphatases modulating their activity or substrate specificity, probably by inducing a conformational change in the catalytic subunit, a direct target of the PPIase. Can reactivate inactive phosphatase PP2A-phosphatase methylesterase complexes (PP2Ai) in presence of ATP and Mg(2+) by dissociating the inactive form from the complex. This chain is Serine/threonine-protein phosphatase 2A activator 2 (RRD2), found in Eremothecium gossypii (strain ATCC 10895 / CBS 109.51 / FGSC 9923 / NRRL Y-1056) (Yeast).